Reading from the N-terminus, the 249-residue chain is Derlin-2 (249 aa).

Residues Met-1–Thr-21 lie on the Cytoplasmic side of the membrane. Residues Ala-22–Leu-42 traverse the membrane as a helical segment. At Asn-43–Phe-96 the chain is on the lumenal side. The helical transmembrane segment at Phe-97–Ile-117 threads the bilayer. The Cytoplasmic portion of the chain corresponds to Pro-118–Glu-122. A helical transmembrane segment spans residues Thr-123–Ser-143. At Lys-144 to Ser-152 the chain is on the lumenal side. Residues Phe-153 to Ile-173 traverse the membrane as a helical segment. Residues Leu-174 to Gln-249 lie on the Cytoplasmic side of the membrane.

The protein belongs to the derlin family.

Its subcellular location is the endoplasmic reticulum membrane. May be involved in the degradation process of specific misfolded endoplasmic reticulum (ER) luminal proteins. The polypeptide is Derlin-2 (DER2) (Oryza sativa subsp. japonica (Rice)).